The following is a 198-amino-acid chain: Ribonuclease HII (198 aa).

Residues 2–191 (VLECGVDETG…IRELLVGKDN (190 aa)) enclose the RNase H type-2 domain. Aspartate 8, glutamate 9, and aspartate 100 together coordinate a divalent metal cation.

Belongs to the RNase HII family. Mn(2+) is required as a cofactor. Mg(2+) serves as cofactor.

It is found in the cytoplasm. It carries out the reaction Endonucleolytic cleavage to 5'-phosphomonoester.. In terms of biological role, endonuclease that specifically degrades the RNA of RNA-DNA hybrids. This chain is Ribonuclease HII, found in Desulforamulus reducens (strain ATCC BAA-1160 / DSM 100696 / MI-1) (Desulfotomaculum reducens).